Consider the following 482-residue polypeptide: G2/mitotic-specific cyclin cdc13 (482 aa).

Polar residues-rich tracts occupy residues 35 to 55, 78 to 92, and 118 to 140; these read LHSS…STNV, SKNT…SVST, and SVFN…SVST. The disordered stretch occupies residues 35-140; sequence LHSSENSLVN…LSTKSHSVST (106 aa). Residues 206 to 332 form the Cyclin N-terminal domain; the sequence is DIFEYLNELE…ILRVLEFNLA (127 aa).

It belongs to the cyclin family. Cyclin AB subfamily. Interacts with cdc2. Interacts with rum1. Associates with microtubules. Also interacts with cdc11.

It is found in the nucleus. The protein resides in the cytoplasm. The protein localises to the cytoskeleton. It localises to the microtubule organizing center. Its subcellular location is the spindle pole body. In terms of biological role, essential for the control of the cell cycle at the G2/M (mitosis) transition. Interacts with the cdc2 protein kinase to form MPF. G2/M cyclins accumulate steadily during G2 and are abruptly destroyed at mitosis. Involved in the reorganization of the cytoskeleton on transition from G2 to mitosis. Association with rum1 promotes its proteolysis during G1. Also essential for initiation of meiosis II. This chain is G2/mitotic-specific cyclin cdc13, found in Schizosaccharomyces pombe (strain 972 / ATCC 24843) (Fission yeast).